The sequence spans 198 residues: Dephospho-CoA kinase (198 aa).

One can recognise a DPCK domain in the interval 4–198 (RIGLTGGIAS…CGLRADGTTW (195 aa)). 12–17 (ASGKSS) contributes to the ATP binding site.

Belongs to the CoaE family.

The protein localises to the cytoplasm. It carries out the reaction 3'-dephospho-CoA + ATP = ADP + CoA + H(+). Its pathway is cofactor biosynthesis; coenzyme A biosynthesis; CoA from (R)-pantothenate: step 5/5. Catalyzes the phosphorylation of the 3'-hydroxyl group of dephosphocoenzyme A to form coenzyme A. This is Dephospho-CoA kinase from Parasynechococcus marenigrum (strain WH8102).